Consider the following 570-residue polypeptide: Ferroportin (570 aa).

The Cytoplasmic segment spans residues 1 to 23; it reads MTKARDQTHQEGCCGSLANYLTS. Residues 24–53 traverse the membrane as a helical segment; the sequence is AKFLLYLGHSLSTWGDRMWHFAVSVFLVEL. Residues aspartate 39 and histidine 43 each contribute to the Fe cation site. Residues 54–57 are Extracellular-facing; sequence YGNS. The helical transmembrane segment at 58–84 threads the bilayer; sequence LLLTAVYGLVVAGSVLVLGAIIGDWVD. Residues 85-87 are Cytoplasmic-facing; it reads KNA. The helical transmembrane segment at 88 to 118 threads the bilayer; that stretch reads RLKVAQTSLVVQNVSVILCGIILMMVFLHKN. Residues 119–126 are Extracellular-facing; that stretch reads ELLTMYHG. The chain crosses the membrane as a helical span at residues 127–162; that stretch reads WVLTVCYILIITIANIANLASTATAITIQRDWIVVV. The Cytoplasmic segment spans residues 163-164; it reads AG. Residues 165–195 form a helical membrane-spanning segment; the sequence is ENRSRLADMNATIRRIDQLTNILAPMAVGQI. The Extracellular segment spans residues 196–202; it reads MTFGSPV. The chain crosses the membrane as a helical span at residues 203–229; the sequence is IGCGFISGWNLVSMCVEYFLLWKVYQK. Topologically, residues 230–306 are cytoplasmic; sequence TPALAVKAAL…DGWVSYYNQP (77 aa). The helical transmembrane segment at 307–333 threads the bilayer; it reads VFLAGMGLAFLYMTVLGFDCITTGYAY. Residue cysteine 326 participates in Fe cation binding. Residues 334–338 lie on the Extracellular side of the membrane; that stretch reads TQGLS. A helical transmembrane segment spans residues 339–366; it reads GSILSILMGASAITGIMGTVAFTWLRRK. Over 367–368 the chain is Cytoplasmic; it reads CG. Residues 369 to 391 traverse the membrane as a helical segment; sequence LVRTGLFSGLAQLSCLILCVISV. Residues 392-452 are Extracellular-facing; the sequence is FMPGSPLDLS…EMSTKPIPIV (61 aa). Asparagine 437 carries an N-linked (GlcNAc...) asparagine glycan. Residues 453 to 482 traverse the membrane as a helical segment; it reads SVSLLFAGVIAARIGLWSFDLTVTQLLQEN. At 483–487 the chain is on the cytoplasmic side; the sequence is VIESE. Residues 488–512 traverse the membrane as a helical segment; it reads RGIINGVQNSMNYLLDLLHFIMVIL. A Fe cation-binding site is contributed by histidine 506. The Extracellular portion of the chain corresponds to 513–515; the sequence is APN. A helical membrane pass occupies residues 516–541; it reads PEAFGLLVLISVSFVAMGHLMYFRFA. Topologically, residues 542 to 570 are cytoplasmic; that stretch reads QKTLGNQIFVCGPDEKEVTDENQPNTSVV.

This sequence belongs to the ferroportin (FP) (TC 2.A.100) family. SLC40A subfamily. Identified in a complex with STOM. Interacts with HAMP; affinity of the peptide hormone HAMP for SLC40A1 increases by 80-fold in the presence of iron and the interaction promotes SLC40A1 ubiquitination and degradation. Part of a complex composed of SLC40A1/ferroportin, TF/transferrin and HEPH/hephaestin that transfers iron from cells to transferrin. Polyubiquitinated by RNF217; leading to proteasomal degradation. Under conditions of high systemic iron levels, both the hormone peptide hepcidin/HAMP and holo(iron bound)-transferrin/TF induce the ubiquitination, internalization and proteasomal degradation of SLC40A1 to control iron release from cells. As to expression, high expression in spleen, liver, kidney, heart and duodenum.

It localises to the cell membrane. Its subcellular location is the basolateral cell membrane. It carries out the reaction Fe(2+)(in) = Fe(2+)(out). Transports Fe(2+) from the inside of a cell to the outside of the cell, playing a key role for maintaining systemic iron homeostasis. Transports iron from intestinal, splenic, hepatic cells, macrophages and erythrocytes into the blood to provide iron to other tissues. Controls therefore dietary iron uptake, iron recycling by macrophages and erythrocytes, and release of iron stores in hepatocytes. When iron is in excess in serum, circulating HAMP/hepcidin levels increase resulting in a degradation of SLC40A1, thus limiting the iron efflux to plasma. The chain is Ferroportin from Mus musculus (Mouse).